The sequence spans 439 residues: Acyl transferase 7 (439 aa).

Residues 1–25 (MAAAAPDKAVERLSQKLVHPSSPTP) are disordered. Active-site proton acceptor residues include histidine 176 and aspartate 383.

The protein belongs to the plant acyltransferase family.

In terms of biological role, involved in the incorporation of ferulate into the cell wall. May act as arabinoxylan feruloyl transferase. This chain is Acyl transferase 7, found in Oryza sativa subsp. japonica (Rice).